Reading from the N-terminus, the 275-residue chain is Large ribosomal subunit protein uL2 (275 aa).

Disordered stretches follow at residues 24–47 (IHKG…NHHG) and 227–261 (PVDH…KTRK).

The protein belongs to the universal ribosomal protein uL2 family. As to quaternary structure, part of the 50S ribosomal subunit. Forms a bridge to the 30S subunit in the 70S ribosome.

Functionally, one of the primary rRNA binding proteins. Required for association of the 30S and 50S subunits to form the 70S ribosome, for tRNA binding and peptide bond formation. It has been suggested to have peptidyltransferase activity; this is somewhat controversial. Makes several contacts with the 16S rRNA in the 70S ribosome. This Xylella fastidiosa (strain M12) protein is Large ribosomal subunit protein uL2.